Consider the following 86-residue polypeptide: Exodeoxyribonuclease 7 small subunit (86 aa).

Residues 64-86 (SNPETVQDKTDTDEPDSNEFSLT) form a disordered region.

Belongs to the XseB family. In terms of assembly, heterooligomer composed of large and small subunits.

The protein localises to the cytoplasm. It carries out the reaction Exonucleolytic cleavage in either 5'- to 3'- or 3'- to 5'-direction to yield nucleoside 5'-phosphates.. Its function is as follows. Bidirectionally degrades single-stranded DNA into large acid-insoluble oligonucleotides, which are then degraded further into small acid-soluble oligonucleotides. The chain is Exodeoxyribonuclease 7 small subunit from Akkermansia muciniphila (strain ATCC BAA-835 / DSM 22959 / JCM 33894 / BCRC 81048 / CCUG 64013 / CIP 107961 / Muc).